A 233-amino-acid chain; its full sequence is MTIGIIGAMEEEVELLKNSMSSVEEIVIGGAKFYIGEIASKEVVLLESGIGKVNAALGTTLMADRFKPEVIINTGSAGGMAEGLAVGDVIISDRLAYGDVDVTEFGYTYGQVPRMPAFYQGDAVLLKKAETIYREYFATSENKAVYGLVVTNDSFIMRPDQHEIIRTFFPDVKAVEMEAAAIAQVAYQFDIPFLIIRAISDLANQEATISFDEFIHLAAKQSATCIIELLKTI.

Glutamate 12 acts as the Proton acceptor in catalysis. Residues glycine 78, isoleucine 156, and 177 to 178 (ME) each bind substrate. Aspartate 201 acts as the Proton donor in catalysis.

Belongs to the PNP/UDP phosphorylase family. MtnN subfamily.

It catalyses the reaction S-adenosyl-L-homocysteine + H2O = S-(5-deoxy-D-ribos-5-yl)-L-homocysteine + adenine. The enzyme catalyses S-methyl-5'-thioadenosine + H2O = 5-(methylsulfanyl)-D-ribose + adenine. The catalysed reaction is 5'-deoxyadenosine + H2O = 5-deoxy-D-ribose + adenine. It functions in the pathway amino-acid biosynthesis; L-methionine biosynthesis via salvage pathway; S-methyl-5-thio-alpha-D-ribose 1-phosphate from S-methyl-5'-thioadenosine (hydrolase route): step 1/2. In terms of biological role, catalyzes the irreversible cleavage of the glycosidic bond in both 5'-methylthioadenosine (MTA) and S-adenosylhomocysteine (SAH/AdoHcy) to adenine and the corresponding thioribose, 5'-methylthioribose and S-ribosylhomocysteine, respectively. Also cleaves 5'-deoxyadenosine, a toxic by-product of radical S-adenosylmethionine (SAM) enzymes, into 5-deoxyribose and adenine. This chain is 5'-methylthioadenosine/S-adenosylhomocysteine nucleosidase, found in Listeria monocytogenes serovar 1/2a (strain ATCC BAA-679 / EGD-e).